Consider the following 210-residue polypeptide: Ribonuclease HII (210 aa).

The region spanning 18–208 (YPVAGIDEAG…VNDIISQTKL (191 aa)) is the RNase H type-2 domain. A divalent metal cation contacts are provided by Asp24, Glu25, and Asp116.

This sequence belongs to the RNase HII family. The cofactor is Mn(2+). It depends on Mg(2+) as a cofactor.

The protein localises to the cytoplasm. It carries out the reaction Endonucleolytic cleavage to 5'-phosphomonoester.. Endonuclease that specifically degrades the RNA of RNA-DNA hybrids. This Endomicrobium trichonymphae protein is Ribonuclease HII.